A 360-amino-acid chain; its full sequence is Peptide chain release factor 1 (360 aa).

Q235 is subject to N5-methylglutamine. A disordered region spans residues 284–313 (AKRQQAEASTRRNLLGSGDRSDRNRTYNFP).

The protein belongs to the prokaryotic/mitochondrial release factor family. Post-translationally, methylated by PrmC. Methylation increases the termination efficiency of RF1.

The protein localises to the cytoplasm. Peptide chain release factor 1 directs the termination of translation in response to the peptide chain termination codons UAG and UAA. In Escherichia coli O127:H6 (strain E2348/69 / EPEC), this protein is Peptide chain release factor 1.